The following is a 444-amino-acid chain: UDP-N-acetylmuramoylalanine--D-glutamate ligase (444 aa).

118–124 (GTNGKTT) is a binding site for ATP.

This sequence belongs to the MurCDEF family.

Its subcellular location is the cytoplasm. The catalysed reaction is UDP-N-acetyl-alpha-D-muramoyl-L-alanine + D-glutamate + ATP = UDP-N-acetyl-alpha-D-muramoyl-L-alanyl-D-glutamate + ADP + phosphate + H(+). The protein operates within cell wall biogenesis; peptidoglycan biosynthesis. Functionally, cell wall formation. Catalyzes the addition of glutamate to the nucleotide precursor UDP-N-acetylmuramoyl-L-alanine (UMA). The protein is UDP-N-acetylmuramoylalanine--D-glutamate ligase of Protochlamydia amoebophila (strain UWE25).